A 484-amino-acid polypeptide reads, in one-letter code: Cobyric acid synthase (484 aa).

Residues 249–438 form the GATase cobBQ-type domain; that stretch reads QLRVAVPVFT…LHGIFDRPET (190 aa). Residue Cys-330 is the Nucleophile of the active site. The active site involves His-430.

Belongs to the CobB/CobQ family. CobQ subfamily.

It functions in the pathway cofactor biosynthesis; adenosylcobalamin biosynthesis. Catalyzes amidations at positions B, D, E, and G on adenosylcobyrinic A,C-diamide. NH(2) groups are provided by glutamine, and one molecule of ATP is hydrogenolyzed for each amidation. In Vibrio cholerae serotype O1 (strain ATCC 39541 / Classical Ogawa 395 / O395), this protein is Cobyric acid synthase.